The primary structure comprises 165 residues: 3-hydroxyacyl-[acyl-carrier-protein] dehydratase FERN, mitochondrial (165 aa).

The N-terminal 35 residues, 1–35 (MLMKRLFSSSHVFSSSSASSNLLKIGSVLKQARTF), are a transit peptide targeting the mitochondrion. The 89-residue stretch at 36-124 (ADDDVLGYSK…AVSIRQIKNK (89 aa)) folds into the MaoC-like domain.

In terms of assembly, homodimer.

It is found in the mitochondrion. It catalyses the reaction a (3R)-hydroxyacyl-[ACP] = a (2E)-enoyl-[ACP] + H2O. The protein operates within lipid metabolism; fatty acid biosynthesis. 3-hydroxyl-[acyl-carrier-protein] (3-hydroxyl-ACP) dehydratase required for mitochondrial fatty acid synthesis (mtFAS). Essential for photorespiration, tomato morphogenesis and plant development, probably by influencing mitochondrial membrane lipid composition and other lipid metabolic pathways, and by contributing to energy supply and reactive oxygen species (ROS) homeostasis. The sequence is that of 3-hydroxyacyl-[acyl-carrier-protein] dehydratase FERN, mitochondrial from Solanum lycopersicum (Tomato).